Reading from the N-terminus, the 251-residue chain is Probable transcriptional regulatory protein AAur_2300 (251 aa).

Belongs to the TACO1 family.

The protein localises to the cytoplasm. The chain is Probable transcriptional regulatory protein AAur_2300 from Paenarthrobacter aurescens (strain TC1).